The sequence spans 542 residues: MAKIIAFEEEARRGMERGLNHLADAVKVTLGPKGRNVVLEKKWGAPTITNDGVSIAKEIELEEPFEKIGAELVKEVAKKTDDVAGDGTTTATVLAQALVREGLRNVAAGANPIALKKGIDKAVEAVTAALLEQAKEVETKEEIAATAGISAGDPAIGELIAEALDKVGKEGVITVEESNALGLELELTEGMRFDKGYLSAYFVTDQERQEAVLEDAYILLVESKISSVKDLLPLLEKVIQGGKSLVIIAEDIEGEALATLVVNKLKGTFKSVAVKAPGFGDRRKAMLQDMAILTGGQVISETVGLSLENADLDALGQARKIVVTKDETTIVEGAGDPDQLAGRVAQIRAEIENSDSDYDREKLQERLAKLAGGVAVIKAGAATEVELKERKHRIEDAVRNAKAAVEEGIVAGGGVALIQAGKVAFETLELVGDESTGGNIVKVAIDAPLKQIAINAGLEGGVVAEKVRSLPAGHGLNAATGDYEDLLAAGINDPVKVTRSALQNAASIAGLFLTTEAIVADKPEKASAPAGGGDGDMGGMGF.

Residues 29 to 32 (TLGP), 86 to 90 (DGTTT), glycine 413, 477 to 479 (NAA), and aspartate 493 each bind ATP.

It belongs to the chaperonin (HSP60) family. In terms of assembly, forms a cylinder of 14 subunits composed of two heptameric rings stacked back-to-back. Interacts with the co-chaperonin GroES.

It localises to the cytoplasm. The catalysed reaction is ATP + H2O + a folded polypeptide = ADP + phosphate + an unfolded polypeptide.. Together with its co-chaperonin GroES, plays an essential role in assisting protein folding. The GroEL-GroES system forms a nano-cage that allows encapsulation of the non-native substrate proteins and provides a physical environment optimized to promote and accelerate protein folding. The protein is Chaperonin GroEL of Beutenbergia cavernae (strain ATCC BAA-8 / DSM 12333 / CCUG 43141 / JCM 11478 / NBRC 16432 / NCIMB 13614 / HKI 0122).